Reading from the N-terminus, the 416-residue chain is UDP-N-acetylmuramoylalanine--D-glutamate ligase (416 aa).

104 to 110 (GSNGKST) lines the ATP pocket.

Belongs to the MurCDEF family.

The protein resides in the cytoplasm. The enzyme catalyses UDP-N-acetyl-alpha-D-muramoyl-L-alanine + D-glutamate + ATP = UDP-N-acetyl-alpha-D-muramoyl-L-alanyl-D-glutamate + ADP + phosphate + H(+). Its pathway is cell wall biogenesis; peptidoglycan biosynthesis. Functionally, cell wall formation. Catalyzes the addition of glutamate to the nucleotide precursor UDP-N-acetylmuramoyl-L-alanine (UMA). This chain is UDP-N-acetylmuramoylalanine--D-glutamate ligase, found in Francisella tularensis subsp. tularensis (strain FSC 198).